The chain runs to 214 residues: Homologous-pairing protein 2 homolog (214 aa).

The stretch at 79–147 forms a coiled coil; it reads SDSELKDLDA…EHKLTNIKSA (69 aa). Positions 115 to 179 are DNA-binding; sequence TSSLTTEEML…WKKRKRMATD (65 aa).

Belongs to the HOP2 family.

Its subcellular location is the nucleus. Its function is as follows. Plays an important role in meiotic recombination. Stimulates DMC1-mediated strand exchange required for pairing of homologous chromosomes during meiosis. This is Homologous-pairing protein 2 homolog (psmc3ip) from Xenopus laevis (African clawed frog).